The primary structure comprises 149 residues: uncharacterized protein (149 aa).

3 consecutive transmembrane segments (helical) span residues valine 39 to glycine 61, valine 82 to leucine 104, and tryptophan 119 to leucine 141.

To M.pneumoniae MPN_090.

Its subcellular location is the cell membrane. This is an uncharacterized protein from Mycoplasma pneumoniae (strain ATCC 29342 / M129 / Subtype 1) (Mycoplasmoides pneumoniae).